The primary structure comprises 116 residues: Putative pterin-4-alpha-carbinolamine dehydratase (116 aa).

The protein belongs to the pterin-4-alpha-carbinolamine dehydratase family.

It catalyses the reaction (4aS,6R)-4a-hydroxy-L-erythro-5,6,7,8-tetrahydrobiopterin = (6R)-L-erythro-6,7-dihydrobiopterin + H2O. This is Putative pterin-4-alpha-carbinolamine dehydratase from Xylella fastidiosa (strain M12).